The primary structure comprises 343 residues: Shematrin-like protein 3 (343 aa).

Residues methionine 1 to alanine 16 form the signal peptide.

In terms of tissue distribution, prismatic layer of shell (at protein level).

The protein localises to the secreted. This is Shematrin-like protein 3 from Pinctada maxima (Silver-lipped pearl oyster).